The chain runs to 746 residues: Histone-lysine N-methyltransferase EZH2 (746 aa).

The segment at 1–340 is interaction with DNMT1, DNMT3A and DNMT3B; that stretch reads MGQTGKKSEK…AKEFAAALTA (340 aa). Ser-21 carries the phosphoserine; by PKB/AKT1 modification. Residues 39–68 are interaction with EED; the sequence is KSMFSSNRQKILERTEILNQEWKQRRIQPV. O-linked (GlcNAc) serine glycosylation occurs at Ser-75. Ser-76 carries the post-translational modification Phosphoserine. Residues 180 to 222 form a disordered region; that stretch reads QYNDDDDDDDGDDPEEREEKQKDLEDHRDDKESRPPRKFPSDK. Acidic residues predominate over residues 182–195; the sequence is NDDDDDDDGDDPEE. The span at 196-222 shows a compositional bias: basic and acidic residues; it reads REEKQKDLEDHRDDKESRPPRKFPSDK. Residues 329-522 form an interaction with CDYL region; it reads EGAKEFAAAL…SSNHVYNYQP (194 aa). A Phosphothreonine modification is found at Thr-339. The tract at residues 340 to 426 is disordered; the sequence is AERIKTPPKR…PIKMKPNIEP (87 aa). Thr-345 carries the post-translational modification Phosphothreonine; by CDK1 and CDK2. Over residues 345-357 the composition is skewed to basic residues; the sequence is TPPKRPGGRRRGR. Residues Ser-363 and Ser-366 each carry the phosphoserine modification. Thr-367 carries the post-translational modification Phosphothreonine. Residues 374–385 show a composition bias toward basic and acidic residues; that stretch reads ESKDTDSDREAG. Position 487 is a phosphothreonine (Thr-487). The 103-residue stretch at 503 to 605 folds into the CXC domain; the sequence is CRKIQLKKDG…SKNVSCKNCS (103 aa). An SET domain is found at 612–727; the sequence is KHLLLAPSDV…TGEELFFDYR (116 aa). Lys-634 participates in a covalent cross-link: Glycyl lysine isopeptide (Lys-Gly) (interchain with G-Cter in SUMO2).

The protein belongs to the class V-like SAM-binding methyltransferase superfamily. Histone-lysine methyltransferase family. EZ subfamily. Component of the PRC2/EED-EZH2 complex, which includes EED, EZH2, SUZ12, RBBP4 and RBBP7 and possibly AEBP2. The minimum components required for methyltransferase activity of the PRC2/EED-EZH2 complex are EED, EZH2 and SUZ12. The PRC2 complex may also interact with DNMT1, DNMT3A, DNMT3B and PHF1 via the EZH2 subunit and with SIRT1 via the SUZ12 subunit. Interacts with HDAC1 and HDAC2. Binds ATRX via the SET domain. Interacts with PRAME. Interacts with CDYL. Interacts with BMAL1, CLOCK and CRY1. Interacts with DNMT3L; the interaction is direct. Interacts with EZHIP; the interaction blocks EZH2 methyltransferase activity. Interacts with ZNF263; recruited to the SIX3 promoter along with other proteins involved in chromatin modification and transcriptional corepression where it contributes to transcriptional repression. Interacts with ARMC12. Interacts with ZMYND8; the interaction is dependent on the presence of chromatin. Interacts with DDX18; this interaction inhibits the PRC2 complex. Phosphorylated by AKT1. Phosphorylation by AKT1 reduces methyltransferase activity. Phosphorylation at Thr-345 by CDK1 and CDK2 promotes maintenance of H3K27me3 levels at EZH2-target loci, thus leading to epigenetic gene silencing. In terms of processing, sumoylated. Post-translationally, glycosylated: O-GlcNAcylation at Ser-75 by OGT increases stability of EZH2 and facilitates the formation of H3K27me3 by the PRC2/EED-EZH2 complex.

Its subcellular location is the nucleus. The catalysed reaction is L-lysyl(27)-[histone H3] + 3 S-adenosyl-L-methionine = N(6),N(6),N(6)-trimethyl-L-lysyl(27)-[histone H3] + 3 S-adenosyl-L-homocysteine + 3 H(+). Functionally, polycomb group (PcG) protein. Catalytic subunit of the PRC2/EED-EZH2 complex, which methylates 'Lys-9' (H3K9me) and 'Lys-27' (H3K27me) of histone H3, leading to transcriptional repression of the affected target gene. Able to mono-, di- and trimethylate 'Lys-27' of histone H3 to form H3K27me1, H3K27me2 and H3K27me3, respectively. Displays a preference for substrates with less methylation, loses activity when progressively more methyl groups are incorporated into H3K27, H3K27me0 &gt; H3K27me1 &gt; H3K27me2. Compared to EZH1-containing complexes, it is more abundant in embryonic stem cells and plays a major role in forming H3K27me3, which is required for embryonic stem cell identity and proper differentiation. The PRC2/EED-EZH2 complex may also serve as a recruiting platform for DNA methyltransferases, thereby linking two epigenetic repression systems. EZH2 can also methylate non-histone proteins such as the transcription factor GATA4 and the nuclear receptor RORA. Regulates the circadian clock via histone methylation at the promoter of the circadian genes. Essential for the CRY1/2-mediated repression of the CLOCK-BMAL1 transcriptional activation of PER1/2. Involved in the di and trimethylation of 'Lys-27' of histone H3 on PER1/2 promoters which is necessary for the CRY1/2 proteins to inhibit transcription. The chain is Histone-lysine N-methyltransferase EZH2 (EZH2) from Macaca fascicularis (Crab-eating macaque).